The following is a 450-amino-acid chain: MSAHGDPIPMTAHPSGPLSGTAQVPGDKSISHRSLILGALAVGETKVTGLLEGQDVLDTARAMQAFGAEVIQHAPGAWSVHGVGTGGFAEPEDVIDCGNSGTGVRLIMGAMATTPITATFTGDASLRSRPMGRITDPLAGFGTTAVGRRGGRLPMTLTGAADPVPVRYTVPVPSAQVKSAVLLAGLNAPGQTVVIEAEATRDHSERMLRGFGAEISVESAPEGNVITLTGQPELRPQTIVVPRDPSSAAFPVAVGLIVPGSDVLVPGIGLNPTRAGLYTTLQEMGAELSFENMREEGGEPVADLRARFSDAMQGIEVPPERAPSMIDEYPILSVIAAYATGRTVMRGVKELRVKESDRIDAMARGLEACGVRVEEDEDTLIVHGMGPGGVPGGATCASHLDHRIAMSFLCCGLAAQTPVSVDDGGPIATSFPIFEPLMTALGATLTRDST.

Residues 1 to 26 form a disordered region; that stretch reads MSAHGDPIPMTAHPSGPLSGTAQVPG. Positions 28, 29, and 33 each coordinate 3-phosphoshikimate. Lys-28 contributes to the phosphoenolpyruvate binding site. The phosphoenolpyruvate site is built by Gly-101 and Arg-129. 4 residues coordinate 3-phosphoshikimate: Ser-174, Gln-176, Asp-327, and Lys-354. Gln-176 provides a ligand contact to phosphoenolpyruvate. Asp-327 functions as the Proton acceptor in the catalytic mechanism. 2 residues coordinate phosphoenolpyruvate: Arg-358 and Arg-403.

The protein belongs to the EPSP synthase family. In terms of assembly, monomer.

Its subcellular location is the cytoplasm. It catalyses the reaction 3-phosphoshikimate + phosphoenolpyruvate = 5-O-(1-carboxyvinyl)-3-phosphoshikimate + phosphate. The protein operates within metabolic intermediate biosynthesis; chorismate biosynthesis; chorismate from D-erythrose 4-phosphate and phosphoenolpyruvate: step 6/7. Functionally, catalyzes the transfer of the enolpyruvyl moiety of phosphoenolpyruvate (PEP) to the 5-hydroxyl of shikimate-3-phosphate (S3P) to produce enolpyruvyl shikimate-3-phosphate and inorganic phosphate. The sequence is that of 3-phosphoshikimate 1-carboxyvinyltransferase from Dinoroseobacter shibae (strain DSM 16493 / NCIMB 14021 / DFL 12).